Reading from the N-terminus, the 286-residue chain is Phosphoribosylaminoimidazole-succinocarboxamide synthase (286 aa).

This sequence belongs to the SAICAR synthetase family.

The enzyme catalyses 5-amino-1-(5-phospho-D-ribosyl)imidazole-4-carboxylate + L-aspartate + ATP = (2S)-2-[5-amino-1-(5-phospho-beta-D-ribosyl)imidazole-4-carboxamido]succinate + ADP + phosphate + 2 H(+). Its pathway is purine metabolism; IMP biosynthesis via de novo pathway; 5-amino-1-(5-phospho-D-ribosyl)imidazole-4-carboxamide from 5-amino-1-(5-phospho-D-ribosyl)imidazole-4-carboxylate: step 1/2. The sequence is that of Phosphoribosylaminoimidazole-succinocarboxamide synthase from Actinobacillus succinogenes (strain ATCC 55618 / DSM 22257 / CCUG 43843 / 130Z).